A 379-amino-acid polypeptide reads, in one-letter code: Chaperone protein DnaJ (379 aa).

The region spanning 4 to 69 (DLYETLGVQK…QKRAAYDRYG (66 aa)) is the J domain. The CR-type zinc finger occupies 137–215 (GKTAQIRVPT…CHGQGRVVEE (79 aa)). The Zn(2+) site is built by Cys150, Cys153, Cys167, Cys170, Cys189, Cys192, Cys203, and Cys206. CXXCXGXG motif repeat units lie at residues 150–157 (CDVCTGTG), 167–174 (CGTCQGTG), 189–196 (CPTCGGRG), and 203–210 (CTKCHGQG).

This sequence belongs to the DnaJ family. As to quaternary structure, homodimer. Requires Zn(2+) as cofactor.

Its subcellular location is the cytoplasm. In terms of biological role, participates actively in the response to hyperosmotic and heat shock by preventing the aggregation of stress-denatured proteins and by disaggregating proteins, also in an autonomous, DnaK-independent fashion. Unfolded proteins bind initially to DnaJ; upon interaction with the DnaJ-bound protein, DnaK hydrolyzes its bound ATP, resulting in the formation of a stable complex. GrpE releases ADP from DnaK; ATP binding to DnaK triggers the release of the substrate protein, thus completing the reaction cycle. Several rounds of ATP-dependent interactions between DnaJ, DnaK and GrpE are required for fully efficient folding. Also involved, together with DnaK and GrpE, in the DNA replication of plasmids through activation of initiation proteins. This is Chaperone protein DnaJ from Rhizobium meliloti (strain 1021) (Ensifer meliloti).